The primary structure comprises 192 residues: Small ribosomal subunit protein uS4B (192 aa).

Residues Ser89 and Ser179 each carry the phosphoserine modification. An S4 RNA-binding domain is found at 107–181; the sequence is RRLQTQVFKL…CKRKRLRSQQ (75 aa). Positions 166–192 are disordered; sequence GGRPGRCKRKRLRSQQEGGEGEEAEEE.

It belongs to the universal ribosomal protein uS4 family. Component of the small ribosomal subunit (SSU). Mature yeast ribosomes consist of a small (40S) and a large (60S) subunit. The 40S small subunit contains 1 molecule of ribosomal RNA (18S rRNA) and at least 33 different proteins. The large 60S subunit contains 3 rRNA molecules (25S, 5.8S and 5S rRNA) and at least 46 different proteins. Interacts with snoRNA U3. uS11 interacts with MPP10. Component of the ribosomal small subunit (SSU) processome composed of at least 40 protein subunits and snoRNA U3.

It is found in the cytoplasm. Functionally, component of the ribosome, a large ribonucleoprotein complex responsible for the synthesis of proteins in the cell. The small ribosomal subunit (SSU) binds messenger RNAs (mRNAs) and translates the encoded message by selecting cognate aminoacyl-transfer RNA (tRNA) molecules. The large subunit (LSU) contains the ribosomal catalytic site termed the peptidyl transferase center (PTC), which catalyzes the formation of peptide bonds, thereby polymerizing the amino acids delivered by tRNAs into a polypeptide chain. The nascent polypeptides leave the ribosome through a tunnel in the LSU and interact with protein factors that function in enzymatic processing, targeting, and the membrane insertion of nascent chains at the exit of the ribosomal tunnel. uS4 is involved in nucleolar processing of pre-18S ribosomal RNA and ribosome assembly. This chain is Small ribosomal subunit protein uS4B (rps902), found in Schizosaccharomyces pombe (strain 972 / ATCC 24843) (Fission yeast).